Reading from the N-terminus, the 823-residue chain is Polyadenylation and cleavage factor homolog 11 (823 aa).

The CID domain maps to 3–135 (SVESAARDYR…ELDMKINKLD (133 aa)). Disordered stretches follow at residues 142–176 (NPQTGRALRDDPQVMAPSQSRPAGNATSPAASTST), 188–301 (SSTP…KTLK), 340–395 (SSAP…LPAP), 570–643 (LPAP…EKRS), and 728–755 (WLTPRASDETNEQEADKPEEPLPGVASS). Polar residues-rich tracts occupy residues 157–176 (APSQSRPAGNATSPAASTST) and 188–198 (SSTPGAASASK). Positions 200-226 (VVEKTKSPGTVNKEKQVKKEPKQDPLD) are enriched in basic and acidic residues. Composition is skewed to low complexity over residues 227–242 (KLLPSSSASKTSSSPA) and 342–353 (APPFQHPQQHHP). Over residues 374–390 (PQDPAPIVPVQAPPPQQ) the composition is skewed to pro residues. The span at 571 to 581 (PAPARSPSSPR) shows a compositional bias: low complexity. Over residues 609-624 (QPQQNARWGGANKQQN) the composition is skewed to polar residues.

The protein is Polyadenylation and cleavage factor homolog 11 (pcf-11) of Caenorhabditis elegans.